Reading from the N-terminus, the 136-residue chain is Urease subunit beta (136 aa).

The protein belongs to the urease beta subunit family. Heterotrimer of UreA (gamma), UreB (beta) and UreC (alpha) subunits. Three heterotrimers associate to form the active enzyme.

It is found in the cytoplasm. It carries out the reaction urea + 2 H2O + H(+) = hydrogencarbonate + 2 NH4(+). It functions in the pathway nitrogen metabolism; urea degradation; CO(2) and NH(3) from urea (urease route): step 1/1. In Staphylococcus aureus (strain Mu3 / ATCC 700698), this protein is Urease subunit beta.